The sequence spans 181 residues: Neuroblastoma suppressor of tumorigenicity 1 (181 aa).

The signal sequence occupies residues 1–16 (MMLRVLVGAVLPAMLL). 5 cysteine pairs are disulfide-bonded: Cys35-Cys85, Cys49-Cys99, Cys59-Cys118, Cys63-Cys120, and Cys82-Cys123. Residues 35–124 (CEAKNITQIV…ILHCSCQACG (90 aa)) enclose the CTCK domain. The tract at residues 132 to 181 (LSVYVQGEDGPGSQPGTHPHPHPHPHPGGQTPEPEDPPGAPHTEEEGAED) is disordered.

It belongs to the DAN family. As to quaternary structure, homodimer. In terms of tissue distribution, most abundant in normal lung and meningioma.

The protein resides in the secreted. In terms of biological role, possible candidate as a tumor suppressor gene of neuroblastoma. May play an important role in preventing cells from entering the final stage (G1/S) of the transformation process. This is Neuroblastoma suppressor of tumorigenicity 1 (NBL1) from Homo sapiens (Human).